Here is a 310-residue protein sequence, read N- to C-terminus: tRNA-cytidine(32) 2-sulfurtransferase (310 aa).

Positions 58-63 (SGGKDS) match the PP-loop motif motif. Positions 133, 136, and 224 each coordinate [4Fe-4S] cluster.

This sequence belongs to the TtcA family. As to quaternary structure, homodimer. It depends on Mg(2+) as a cofactor. [4Fe-4S] cluster is required as a cofactor.

It localises to the cytoplasm. It carries out the reaction cytidine(32) in tRNA + S-sulfanyl-L-cysteinyl-[cysteine desulfurase] + AH2 + ATP = 2-thiocytidine(32) in tRNA + L-cysteinyl-[cysteine desulfurase] + A + AMP + diphosphate + H(+). Its pathway is tRNA modification. Catalyzes the ATP-dependent 2-thiolation of cytidine in position 32 of tRNA, to form 2-thiocytidine (s(2)C32). The sulfur atoms are provided by the cysteine/cysteine desulfurase (IscS) system. The sequence is that of tRNA-cytidine(32) 2-sulfurtransferase from Paracidovorax citrulli (strain AAC00-1) (Acidovorax citrulli).